A 168-amino-acid polypeptide reads, in one-letter code: Protein C2-DOMAIN ABA-RELATED 1 (168 aa).

Methionine 1 carries the N-acetylmethionine modification. The C2 domain occupies 1–104; it reads MENLVGLLRI…EAIKFAHQLG (104 aa). Ca(2+) is bound by residues arginine 21, aspartate 22, aspartate 27, aspartate 73, tyrosine 74, aspartate 75, and aspartate 81.

Belongs to the plant CAR protein family. Dimers and oligomers. Binds to PYR/PYL/RCAR abscisic acid intracellular receptors in an ABA-independent manner, both at the plasma membrane and in the nucleus. Interacts directly with PYR1, PYL1, PYL4, PYL6 and PYL8. Binds phospholipids in a Ca(2+)-dependent manner. The cofactor is Ca(2+). Expressed in roots.

It localises to the cell membrane. The protein localises to the nucleus. Its function is as follows. Stimulates the GTPase/ATPase activities of Obg-like ATPases. Mediates the transient calcium-dependent interaction of PYR/PYL/RCAR abscisic acid (ABA) receptors with the plasma membrane and thus regulates ABA sensitivity. Binds liposomes in the absence of exogenous Ca(2+), but this activity is enhanced in the presence of Ca(2+) and generates membrane curvature. The polypeptide is Protein C2-DOMAIN ABA-RELATED 1 (Arabidopsis thaliana (Mouse-ear cress)).